The sequence spans 549 residues: Oxygen-dependent choline dehydrogenase (549 aa).

4 to 33 is a binding site for FAD; that stretch reads DFVIIGSGSAGSAMASRLSEDGKHTVIVLE. Residue H465 is the Proton acceptor of the active site.

This sequence belongs to the GMC oxidoreductase family. Requires FAD as cofactor.

It catalyses the reaction choline + A = betaine aldehyde + AH2. The enzyme catalyses betaine aldehyde + NAD(+) + H2O = glycine betaine + NADH + 2 H(+). Its pathway is amine and polyamine biosynthesis; betaine biosynthesis via choline pathway; betaine aldehyde from choline (cytochrome c reductase route): step 1/1. In terms of biological role, involved in the biosynthesis of the osmoprotectant glycine betaine. Catalyzes the oxidation of choline to betaine aldehyde and betaine aldehyde to glycine betaine at the same rate. The protein is Oxygen-dependent choline dehydrogenase of Rhizobium rhizogenes (strain K84 / ATCC BAA-868) (Agrobacterium radiobacter).